The following is a 3957-amino-acid chain: Ankyrin-2 (3957 aa).

A compositionally biased stretch (basic and acidic residues) spans 1–14; it reads MMNEDAAQKSDSGE. The segment at 1 to 34 is disordered; the sequence is MMNEDAAQKSDSGEKFNGSSQRRKRPKKSDSNAS. 24 ANK repeats span residues 30-62, 63-92, 96-125, 129-158, 162-191, 193-220, 232-261, 265-294, 298-327, 331-360, 364-393, 397-426, 430-459, 463-492, 496-525, 529-558, 562-591, 595-624, 628-657, 661-690, 694-723, 727-756, 760-789, and 793-822; these read DSNASFLRAARAGNLDKVVEYLKGGIDINTCNQ, NGLNALHLAAKEGHVGLVQELLGRGSSVDS, KGNTALHIASLAGQAEVVKVLVKEGANINA, NGFTPLYMAAQENHIDVVKYLLENGANQST, DGFTPLAVALQQGHNQAVAILLENDTKGKV, LPALHIAARKDDTKSAALLLQNDHNADV, SGFTPLHIAAHYGNVNVATLLLNRGAAVDF, NGITPLHVASKRGNTNMVKLLLDRGGQIDA, DGLTPLHCAARSGHDQVVELLLERGAPLLA, NGLSPLHMAAQGDHVECVKHLLQHKAPVDD, DYLTALHVAAHCGHYRVTKLLLDKRANPNA, NGFTPLHIACKKNRIKVMELLVKYGASIQA, SGLTPIHVAAFMGHLNIVLLLLQNGASPDV, RGETALHMAARAGQVEVVRCLLRNGALVDA, EEQTPLHIASRLGKTEIVQLLLQHMAHPDA, NGYTPLHISAREGQVDVASVLLEAGAAHSL, KGFTPLHVAAKYGSLDVAKLLLQRRAAADS, NGLTPLHVAAHYDNQKVALLLLEKGASPHA, NGYTPLHIAAKKNQMQIASTLLNYGAETNI, QGVTPLHLASQEGHTDMVTLLLDKGANIHM, SGLTSLHLAAQEDKVNVADILTKHGADQDA, LGYTPLIVACHYGNVKMVNFLLKQGANVNA, NGYTPLHQAAQQGHTHIINVLLQHGAKPNA, and NGNTALAIAKRLGYISVVDTLKVVTEEVTT. 2 positions are modified to phosphoserine: serine 31 and serine 34. A Phosphotyrosine modification is found at tyrosine 378. At tyrosine 531 the chain carries Phosphotyrosine. Serine 846 is modified (phosphoserine). The residue at position 853 (threonine 853) is a Phosphothreonine. The residue at position 874 (serine 874) is a Phosphoserine. Residues 966–1125 are interaction with SPTBN1; sequence SGFLVSFMVD…ELNEILNGMD (160 aa). 2 consecutive ZU5 domains span residues 968 to 1156 and 1158 to 1304; these read FLVS…VVSR and KQDS…LIDC. Positions 1289–1423 are UPA domain; sequence VSFTTNVSAR…FVKVRDTTQE (135 aa). Residue tyrosine 1382 is modified to Phosphotyrosine. Positions 1450–1535 constitute a Death 1 domain; that stretch reads ITLPIYTKES…SDKAGSIKVK (86 aa). The interval 1457–1486 is disordered; the sequence is KESESDQEQEEEIDMTSEKNDETESTETSV. A phosphoserine mark is found at serine 1459, serine 1461, serine 1473, serine 1500, and serine 1596. Residues 1461–1471 are compositionally biased toward acidic residues; it reads SDQEQEEEIDM. Disordered stretches follow at residues 1670 to 2137, 2197 to 2411, 2430 to 2484, 2507 to 2586, 2604 to 2852, 2864 to 2904, and 2923 to 2951; these read AVGR…TDFS, ALDG…GLEL, AVSH…GIFP, SRLL…TPEE, EAKQ…SLPH, DISA…TDRF, and QITSPYENVPSQSFFSSEESKTQTDANHT. 2 stretches are compositionally biased toward basic and acidic residues: residues 1674 to 1683 and 1711 to 1733; these read SSEKEGKDIP and KQKQKEEGLQASAEKAELKKGSS. A phosphoserine mark is found at serine 1732, serine 1733, and serine 1736. Positions 1766 to 1783 are enriched in basic and acidic residues; sequence IKDKVKALQKRVEDEQKG. 7 Repeat A repeats span residues 1806–1817, 1818–1829, 1830–1841, 1842–1853, 1854–1865, 1866–1877, and 1878–1889; these read HPAASPSLKSER, HAPGSPSPKTER, HSTLSSSAKTER, HPPVSPSSKTEK, HSPVSPSAKTER, HSPASSSSKTEK, and HSPVSPSTKTER. A repeat-rich region region spans residues 1806-1983; the sequence is HPAASPSLKS…PVSPTSKTER (178 aa). Serine 1855 and serine 1858 each carry phosphoserine. Basic and acidic residues-rich tracts occupy residues 1886-1902 and 1921-1937; these read KTERHSPVSSTKTERHP and RTEKHPPVSPGRTEKRL. The stretch at 1890-1900 is one Repeat A; approximate repeat; the sequence is HSPVSSTKTER. Repeat A repeat units lie at residues 1901-1912 and 1913-1924; these read HPPVSPSGKTDK and RPPVSPSGRTEK. One copy of the Repeat A; approximate repeat lies at 1925–1935; the sequence is HPPVSPGRTEK. At serine 1929 the chain carries Phosphoserine. 4 Repeat A repeats span residues 1936-1947, 1948-1959, 1960-1971, and 1972-1983; these read RLPVSPSGRTDK, HQPVSTAGKTEK, HLPVSPSGKTEK, and QPPVSPTSKTER. Basic and acidic residues-rich tracts occupy residues 1980–1994, 2003–2034, 2075–2093, and 2102–2117; these read KTERIEETMSVRELM, PSKHKTGLFEHKSAKQKQPQEKGKVRVEKEKG, VKKEDAAGGKEKVLSHKIP, and EESHRESEVPKEKMAD. Serine 2127 carries the phosphoserine modification. The span at 2128-2137 shows a compositional bias: basic and acidic residues; the sequence is PDRKTSTDFS. Phosphothreonine is present on threonine 2239. Polar residues predominate over residues 2240–2251; sequence PETSPESLSFSP. The residue at position 2243 (serine 2243) is a Phosphoserine. Residues 2252–2282 show a composition bias toward basic and acidic residues; the sequence is KKSEEQTGETKESTKTETTTEIRSEKEHPTT. Threonine 2269 carries the phosphothreonine modification. At serine 2275 the chain carries Phosphoserine. A compositionally biased stretch (polar residues) spans 2355–2376; sequence TFGSSAHKTQTDSEVQESTATS. Residues serine 2405, serine 2440, serine 2454, serine 2516, and serine 2521 each carry the phosphoserine modification. Residues 2523–2545 are compositionally biased toward polar residues; that stretch reads EQTSLMESSGKSPLSPDTPSSEE. Composition is skewed to basic and acidic residues over residues 2576 to 2586 and 2604 to 2619; these read NGEKKRFTPEE and EAKQKRDYKKEPKQEE. The residue at position 2583 (threonine 2583) is a Phosphothreonine. A phosphoserine mark is found at serine 2679 and serine 2701. Positions 2696–2705 are enriched in low complexity; sequence PSSMDSNSSP. Over residues 2729–2776 the composition is skewed to basic and acidic residues; that stretch reads EPGKSEEEKDSESHLAEDRHAVSTEAEDRSYDKLNRDTDQPKICDGHG. Serine 2781 and serine 2795 each carry phosphoserine. Residues 2781–2791 are compositionally biased toward low complexity; that stretch reads SPSSSAAPVSS. The segment covering 2892–2903 has biased composition (polar residues); the sequence is SQDSSITTQTDR. Residue serine 2956 is modified to Phosphoserine. Disordered regions lie at residues 2987-3016, 3069-3099, and 3136-3462; these read NFEGQDIKMESQQESTLWEMQSDSVSSSFE, LMVDRQSQGTTPDTTPARTPTEEGTPTSEQN, and QESR…PTKE. Over residues 2998 to 3016 the composition is skewed to polar residues; that stretch reads QQESTLWEMQSDSVSSSFE. At serine 3075 the chain carries Phosphoserine. The residue at position 3078 (threonine 3078) is a Phosphothreonine. Residues 3078–3087 are compositionally biased toward low complexity; it reads TTPDTTPART. Residues 3090–3099 are compositionally biased toward polar residues; sequence EEGTPTSEQN. Over residues 3137–3149 the composition is skewed to basic and acidic residues; it reads ESREETLSEDVKE. Positions 3157-3169 are enriched in low complexity; it reads LPLETSAESLALS. A compositionally biased stretch (acidic residues) spans 3175–3194; it reads VDDEADLLPDDVSEEVEEIP. Polar residues-rich tracts occupy residues 3198-3212 and 3256-3265; these read AQLNSQMGISASTET and LDFSTLTRSV. 3 positions are modified to phosphoserine: serine 3273, serine 3276, and serine 3277. Positions 3335 to 3344 are enriched in basic and acidic residues; sequence EENKADEAKP. Positions 3357–3374 are enriched in polar residues; it reads VEQQLSDLDTSVQKTVAP. Phosphoserine is present on residues serine 3390 and serine 3409. Basic and acidic residues predominate over residues 3409-3423; the sequence is SYTETETESRERAEE. The span at 3446–3460 shows a compositional bias: low complexity; sequence SRSTTSSCRGGTSPT. The residue at position 3474 (serine 3474) is a Phosphoserine. Positions 3569–3653 constitute a Death 2 domain; that stretch reads IEERLAYIAD…DIVHLMETNT (85 aa). Position 3735 is a phosphoserine (serine 3735). Phosphothreonine is present on residues threonine 3776, threonine 3797, threonine 3803, and threonine 3814. The tract at residues 3777 to 3858 is disordered; the sequence is PGTETSETQK…VESADNQPET (82 aa). Serine 3823 bears the Phosphoserine mark. Over residues 3832 to 3841 the composition is skewed to basic and acidic residues; sequence PSEHREESSP. Residue serine 3909 is modified to Phosphoserine.

Interacts with RHBG and SPTBN1. Colocalizes with Na/K ATPase, Na/Ca exchanger and SPTBN1. Directly interacts with DMD; this interaction is necessary for DMD localization at the sarcolemma. Interacts with DCTN4; this interaction is required for DCTN4 retention at costameres. Identified in complexes that contain VIM, EZR, AHNAK, BFSP1, BFSP2, ANK2, PLEC, PRX and spectrin. Interacts (via death domain) with RABGAP1L (via Rab-GAP TBC domain). Post-translationally, phosphorylated at multiple sites by different protein kinases and each phosphorylation event regulates the protein's structure and function. Present in plasma membrane of neurons as well as glial cells throughout the brain. Expressed in fetal brain and in temporal cortex of adult brain. Also expressed in the inner segments of rod photoreceptors in retina.

The protein resides in the cytoplasm. It localises to the cytoskeleton. The protein localises to the membrane. It is found in the myofibril. Its subcellular location is the sarcomere. The protein resides in the m line. It localises to the apical cell membrane. The protein localises to the cell membrane. It is found in the postsynaptic cell membrane. Its subcellular location is the early endosome. The protein resides in the recycling endosome. It localises to the lysosome. The protein localises to the mitochondrion. It is found in the z line. Its subcellular location is the sarcolemma. The protein resides in the T-tubule. Its function is as follows. Plays an essential role in the localization and membrane stabilization of ion transporters and ion channels in several cell types, including cardiomyocytes, as well as in striated muscle cells. In skeletal muscle, required for proper localization of DMD and DCTN4 and for the formation and/or stability of a special subset of microtubules associated with costameres and neuromuscular junctions. In cardiomyocytes, required for coordinate assembly of Na/Ca exchanger, SLC8A1/NCX1, Na/K ATPases ATP1A1 and ATP1A2 and inositol 1,4,5-trisphosphate (InsP3) receptors at sarcoplasmic reticulum/sarcolemma sites. Required for expression and targeting of SPTBN1 in neonatal cardiomyocytes and for the regulation of neonatal cardiomyocyte contraction rate. In the inner segment of rod photoreceptors, required for the coordinated expression of the Na/K ATPase, Na/Ca exchanger and beta-2-spectrin (SPTBN1). Plays a role in endocytosis and intracellular protein transport. Associates with phosphatidylinositol 3-phosphate (PI3P)-positive organelles and binds dynactin to promote long-range motility of cells. Recruits RABGAP1L to (PI3P)-positive early endosomes, where RABGAP1L inactivates RAB22A, and promotes polarized trafficking to the leading edge of the migrating cells. Part of the ANK2/RABGAP1L complex which is required for the polarized recycling of fibronectin receptor ITGA5 ITGB1 to the plasma membrane that enables continuous directional cell migration. This Homo sapiens (Human) protein is Ankyrin-2 (ANK2).